The primary structure comprises 435 residues: Nuclear receptor subfamily 6 group A member 1 (435 aa).

Positions 11 to 86 form a DNA-binding region, nuclear receptor; that stretch reads QRACLICGDR…MGMNRKAIRE (76 aa). 2 NR C4-type zinc fingers span residues 14 to 34 and 50 to 69; these read CLIC…CEGC and CSRD…CQYC. The segment at 84 to 158 is disordered; sequence IREDGMPGGR…STPSSSRSME (75 aa). Polar residues predominate over residues 121-141; sequence NTSWSNNGDSDHSSPGNAVSE. Residues 142 to 156 are compositionally biased toward low complexity; the sequence is SNQPSPVSTPSSSRS. The NR LBD domain maps to 204–435; that stretch reads QSHTLINQLL…HSCKTIVTKE (232 aa).

The protein belongs to the nuclear hormone receptor family. NR6 subfamily. In terms of assembly, homodimer. In terms of tissue distribution, transiently expressed in differentiating cells of all embryonic germ layers. Expressed in an anterior to posterior concentration gradient from late gastrula to midneurula stages. Shows a complicated spatio-temporal pattern of expression during neurulation, being predominant in the neural plate and neural crest in midneurula embryos. At late tailbud (stage 30), mainly expressed in the head mesenchyme, gill arches and tail tip. Expression persists in the epidermis, somites and endoderm, and in the central nervous system, expression is restricted to the midbrain, hindbrain and part of the spinal cord. Isoforms Oo and Em are both expressed in the brain and isoform Oo is expressed in the germ cells of both the adult testis and ovary.

Its subcellular location is the cytoplasm. It is found in the nucleus. Its function is as follows. Probable orphan nuclear receptor. Binds to a response element containing repeats of the motif 5'-AGGTCA-3'. Required for anterior-posterior patterning during organogenesis. Acts with chordin to play a role in patterning the midbrain-hindbrain. Isoform Em is required for integrin-mediated cell matrix interaction during neurulation and for the morphogenetic movements leading to formation of the neural tube. Also mediates the effect of retinoic acid on primary neurogenesis. The sequence is that of Nuclear receptor subfamily 6 group A member 1 from Xenopus laevis (African clawed frog).